We begin with the raw amino-acid sequence, 251 residues long: Orotidine 5'-phosphate decarboxylase (251 aa).

Substrate contacts are provided by residues aspartate 19, lysine 42, 69–78 (DLKFHDIPNT), threonine 133, arginine 194, glutamine 204, glycine 224, and arginine 225. Residue lysine 71 is the Proton donor of the active site.

It belongs to the OMP decarboxylase family. Type 1 subfamily. As to quaternary structure, homodimer.

It carries out the reaction orotidine 5'-phosphate + H(+) = UMP + CO2. The protein operates within pyrimidine metabolism; UMP biosynthesis via de novo pathway; UMP from orotate: step 2/2. Functionally, catalyzes the decarboxylation of orotidine 5'-monophosphate (OMP) to uridine 5'-monophosphate (UMP). This chain is Orotidine 5'-phosphate decarboxylase, found in Syntrophus aciditrophicus (strain SB).